The sequence spans 115 residues: DNA-directed RNA polymerase subunit omega (115 aa).

This sequence belongs to the RNA polymerase subunit omega family. In terms of assembly, the RNAP catalytic core consists of 2 alpha, 1 beta, 1 beta' and 1 omega subunit. When a sigma factor is associated with the core the holoenzyme is formed, which can initiate transcription.

The enzyme catalyses RNA(n) + a ribonucleoside 5'-triphosphate = RNA(n+1) + diphosphate. Its function is as follows. Promotes RNA polymerase assembly. Latches the N- and C-terminal regions of the beta' subunit thereby facilitating its interaction with the beta and alpha subunits. The chain is DNA-directed RNA polymerase subunit omega from Cutibacterium acnes (strain DSM 16379 / KPA171202) (Propionibacterium acnes).